The sequence spans 174 residues: Dual-action ribosomal maturation protein DarP (174 aa).

This sequence belongs to the DarP family.

Its subcellular location is the cytoplasm. Its function is as follows. Member of a network of 50S ribosomal subunit biogenesis factors which assembles along the 30S-50S interface, preventing incorrect 23S rRNA structures from forming. Promotes peptidyl transferase center (PTC) maturation. The sequence is that of Dual-action ribosomal maturation protein DarP from Vibrio atlanticus (strain LGP32) (Vibrio splendidus (strain Mel32)).